A 115-amino-acid chain; its full sequence is U3-lycotoxin-Ls1b (115 aa).

Positions 1 to 20 (MKFVLLFGVLLVTLFSYSSA) are cleaved as a signal peptide. A propeptide spanning residues 21-44 (EMLDDFDQADEDELLSLIEKEEAR) is cleaved from the precursor. Cystine bridges form between C48–C63, C55–C72, C62–C87, and C74–C85.

The protein belongs to the neurotoxin 19 (CSTX) family. 01 subfamily. Expressed by the venom gland.

The protein localises to the secreted. In Lycosa singoriensis (Wolf spider), this protein is U3-lycotoxin-Ls1b.